We begin with the raw amino-acid sequence, 282 residues long: Putative sugar uptake protein lp_2594 (282 aa).

10 helical membrane-spanning segments follow: residues 2–21 (IFLI…LLVG), 31–48 (MFGM…FWLF), 53–75 (VTIS…IGQL), 90–112 (MPIS…FGEW), 119–136 (ILGL…ALSA), 146–163 (FSCY…WIYS), 176–194 (LFLP…WAIY), 209–226 (TLPG…ILSA), 233–252 (NAYI…GLFF), and 262–281 (IVSV…TTAL).

This sequence belongs to the GRP transporter (TC 2.A.7.5) family.

The protein localises to the cell membrane. This Lactiplantibacillus plantarum (strain ATCC BAA-793 / NCIMB 8826 / WCFS1) (Lactobacillus plantarum) protein is Putative sugar uptake protein lp_2594.